Here is a 428-residue protein sequence, read N- to C-terminus: Adenylosuccinate synthetase (428 aa).

GTP is bound by residues 12-18 (GDEGKGK) and 40-42 (GHT). The Proton acceptor role is filled by Asp-13. The Mg(2+) site is built by Asp-13 and Gly-40. IMP-binding positions include 13-16 (DEGK), 38-41 (NAGH), Thr-128, Arg-142, Gln-223, Thr-238, and Arg-302. Catalysis depends on His-41, which acts as the Proton donor. Position 298–304 (298–304 (TTTGRPR)) interacts with substrate. Residues Arg-304, 330-332 (KLD), and 412-414 (GVG) each bind GTP.

This sequence belongs to the adenylosuccinate synthetase family. Homodimer. The cofactor is Mg(2+).

The protein localises to the cytoplasm. The enzyme catalyses IMP + L-aspartate + GTP = N(6)-(1,2-dicarboxyethyl)-AMP + GDP + phosphate + 2 H(+). Its pathway is purine metabolism; AMP biosynthesis via de novo pathway; AMP from IMP: step 1/2. In terms of biological role, plays an important role in the de novo pathway of purine nucleotide biosynthesis. Catalyzes the first committed step in the biosynthesis of AMP from IMP. The chain is Adenylosuccinate synthetase from Kineococcus radiotolerans (strain ATCC BAA-149 / DSM 14245 / SRS30216).